The following is a 624-amino-acid chain: Actin-related protein 8 (624 aa).

N-acetylmethionine is present on methionine 1. Residues 1-25 (MTQAEKGDAENGKEKGGEKEKEQRG) are compositionally biased toward basic and acidic residues. Residues 1-29 (MTQAEKGDAENGKEKGGEKEKEQRGVKRP) are disordered. Positions 55 and 56 each coordinate ATP. Serine 132 bears the Phosphoserine mark. Residue 283-286 (DVGD) participates in ATP binding. At serine 412 the chain carries Phosphoserine. Residues 430–462 (SKQEQSAKATADRKSASKPIGFEGDLRGQSSDL) form a disordered region.

This sequence belongs to the actin family. ARP8 subfamily. In terms of assembly, component of the chromatin remodeling INO80 complex; specifically part of a complex module associated with the DBINO domain of INO80. Exists as monomers and dimers, but the dimer is most probably the biologically relevant form required for stable interactions with histones that exploits the twofold symmetry of the nucleosome core.

It localises to the nucleus. The protein localises to the chromosome. Its function is as follows. Plays an important role in the functional organization of mitotic chromosomes. Exhibits low basal ATPase activity, and unable to polymerize. In terms of biological role, proposed core component of the chromatin remodeling INO80 complex which is involved in transcriptional regulation, DNA replication and probably DNA repair. Required for the recruitment of INO80 (and probably the INO80 complex) to sites of DNA damage Strongly prefer nucleosomes and H3-H4 tetramers over H2A-H2B dimers, suggesting it may act as a nucleosome recognition module within the complex. The sequence is that of Actin-related protein 8 (Actr8) from Mus musculus (Mouse).